Reading from the N-terminus, the 337-residue chain is Anthranilate phosphoribosyltransferase (337 aa).

Residues Gly82, 85–86 (GD), Thr90, 92–95 (NIST), 110–118 (KHGGRSVSS), and Ser122 each bind 5-phospho-alpha-D-ribose 1-diphosphate. Gly82 is a binding site for anthranilate. Residue Ser94 coordinates Mg(2+). Anthranilate is bound at residue Arg168. Residues Asp226 and Glu227 each contribute to the Mg(2+) site.

It belongs to the anthranilate phosphoribosyltransferase family. Homodimer. The cofactor is Mg(2+).

The enzyme catalyses N-(5-phospho-beta-D-ribosyl)anthranilate + diphosphate = 5-phospho-alpha-D-ribose 1-diphosphate + anthranilate. Its pathway is amino-acid biosynthesis; L-tryptophan biosynthesis; L-tryptophan from chorismate: step 2/5. Functionally, catalyzes the transfer of the phosphoribosyl group of 5-phosphorylribose-1-pyrophosphate (PRPP) to anthranilate to yield N-(5'-phosphoribosyl)-anthranilate (PRA). The protein is Anthranilate phosphoribosyltransferase of Francisella tularensis subsp. mediasiatica (strain FSC147).